The primary structure comprises 510 residues: Rab proteins geranylgeranyltransferase component A 1 (510 aa).

Belongs to the Rab GDI family. As to quaternary structure, may interact with rab-5, rab-7 and rab-11. Does not interact with rab-3, rab-27 and rab-10. Expressed in several neurons including head neurons, motor neurons located in the ventral nerve cord, HSN and CAN neurons, and tail neurons, and in muscles such as body-wall, pharyngeal, intestinal and anal sphincter. Also expressed in seam cells, the hypodermis and the intestine.

It localises to the cytoplasm. Its function is as follows. Substrate-binding subunit of the Rab geranylgeranyltransferase (GGTase) complex. Binds unprenylated Rab proteins and presents the substrate peptide to the catalytic component B and remains bound to it after the geranylgeranyl transfer reaction. The component A is thought to be regenerated by transferring its prenylated Rab back to the donor membrane. Plays a role in neurotransmitter release from presynaptic terminals at neuromuscular junctions. Positively regulates the function of rab-27 in synaptic transmission most likely through mediating rab-27 prenylation. The chain is Rab proteins geranylgeranyltransferase component A 1 from Caenorhabditis elegans.